The chain runs to 410 residues: Transforming growth factor beta-3 proprotein (410 aa).

The N-terminal stretch at 1 to 23 is a signal peptide; sequence MHLQRALVVLALLNLATISLSLS. N-linked (GlcNAc...) asparagine glycans are attached at residues asparagine 72, asparagine 133, and asparagine 140. The short motif at 259 to 261 is the Cell attachment site element; it reads RGD. The residue at position 291 (glutamine 291) is an N5-methylglutamine. Disulfide bonds link cysteine 305–cysteine 314, cysteine 313–cysteine 376, cysteine 342–cysteine 407, and cysteine 346–cysteine 409.

Belongs to the TGF-beta family. As to quaternary structure, interacts with ASPN. Latency-associated peptide: Homodimer; disulfide-linked. Latency-associated peptide: Interacts with Transforming growth factor beta-3 (TGF-beta-3) chain; interaction is non-covalent and maintains (TGF-beta-3) in a latent state. Latency-associated peptide: Interacts with LRRC32/GARP; leading to regulate activation of TGF-beta-3 and promote epithelial fusion during palate development. Latency-associated peptide: Interacts (via cell attachment site) with integrins, leading to release of the active TGF-beta-3. Transforming growth factor beta-3: Homodimer; disulfide-linked. Transforming growth factor beta-3: Interacts with TGF-beta receptors (TGFBR1 and TGFBR2), leading to signal transduction. In terms of processing, transforming growth factor beta-3 proprotein: The precursor proprotein is cleaved in the Golgi apparatus to form Transforming growth factor beta-3 (TGF-beta-3) and Latency-associated peptide (LAP) chains, which remain non-covalently linked, rendering TGF-beta-3 inactive. Post-translationally, methylated at Gln-291 by N6AMT1. Expressed in mammary glands with a slight increase in expression prior to lactation and again increasing at the onset of involution, expression peaks at day 3 of involution.

It is found in the secreted. The protein resides in the extracellular space. The protein localises to the extracellular matrix. Transforming growth factor beta-3 proprotein: Precursor of the Latency-associated peptide (LAP) and Transforming growth factor beta-3 (TGF-beta-3) chains, which constitute the regulatory and active subunit of TGF-beta-3, respectively. Its function is as follows. Required to maintain the Transforming growth factor beta-3 (TGF-beta-3) chain in a latent state during storage in extracellular matrix. Associates non-covalently with TGF-beta-3 and regulates its activation via interaction with 'milieu molecules', such as LTBP1 and LRRC32/GARP, that control activation of TGF-beta-3. Interaction with integrins results in distortion of the Latency-associated peptide chain and subsequent release of the active TGF-beta-3. Functionally, transforming growth factor beta-3: Multifunctional protein that regulates embryogenesis and cell differentiation and is required in various processes such as secondary palate development. Activation into mature form follows different steps: following cleavage of the proprotein in the Golgi apparatus, Latency-associated peptide (LAP) and Transforming growth factor beta-3 (TGF-beta-3) chains remain non-covalently linked rendering TGF-beta-3 inactive during storage in extracellular matrix. At the same time, LAP chain interacts with 'milieu molecules', such as LTBP1 and LRRC32/GARP that control activation of TGF-beta-3 and maintain it in a latent state during storage in extracellular milieus. TGF-beta-3 is released from LAP by integrins: integrin-binding results in distortion of the LAP chain and subsequent release of the active TGF-beta-3. Once activated following release of LAP, TGF-beta-3 acts by binding to TGF-beta receptors (TGFBR1 and TGFBR2), which transduce signal. This chain is Transforming growth factor beta-3 proprotein, found in Mus musculus (Mouse).